Reading from the N-terminus, the 310-residue chain is Probable manganese-dependent inorganic pyrophosphatase (310 aa).

Positions 9, 13, 15, 76, 98, and 150 each coordinate Mn(2+).

Belongs to the PPase class C family. It depends on Mn(2+) as a cofactor.

The protein localises to the cytoplasm. The enzyme catalyses diphosphate + H2O = 2 phosphate + H(+). This Streptococcus thermophilus (strain ATCC BAA-491 / LMD-9) protein is Probable manganese-dependent inorganic pyrophosphatase.